We begin with the raw amino-acid sequence, 171 residues long: Large ribosomal subunit protein uL10 (171 aa).

Belongs to the universal ribosomal protein uL10 family. As to quaternary structure, part of the ribosomal stalk of the 50S ribosomal subunit. The N-terminus interacts with L11 and the large rRNA to form the base of the stalk. The C-terminus forms an elongated spine to which L12 dimers bind in a sequential fashion forming a multimeric L10(L12)X complex.

Its function is as follows. Forms part of the ribosomal stalk, playing a central role in the interaction of the ribosome with GTP-bound translation factors. In Corynebacterium glutamicum (strain R), this protein is Large ribosomal subunit protein uL10.